Here is a 317-residue protein sequence, read N- to C-terminus: Aspartate carbamoyltransferase catalytic subunit (317 aa).

Residues Arg-66 and Thr-67 each contribute to the carbamoyl phosphate site. Lys-94 serves as a coordination point for L-aspartate. Carbamoyl phosphate is bound by residues Arg-116, His-144, and Gln-147. L-aspartate is bound by residues Arg-177 and Arg-231. Positions 272 and 273 each coordinate carbamoyl phosphate.

The protein belongs to the aspartate/ornithine carbamoyltransferase superfamily. ATCase family. As to quaternary structure, heterododecamer (2C3:3R2) of six catalytic PyrB chains organized as two trimers (C3), and six regulatory PyrI chains organized as three dimers (R2).

It carries out the reaction carbamoyl phosphate + L-aspartate = N-carbamoyl-L-aspartate + phosphate + H(+). The protein operates within pyrimidine metabolism; UMP biosynthesis via de novo pathway; (S)-dihydroorotate from bicarbonate: step 2/3. Functionally, catalyzes the condensation of carbamoyl phosphate and aspartate to form carbamoyl aspartate and inorganic phosphate, the committed step in the de novo pyrimidine nucleotide biosynthesis pathway. In Bradyrhizobium sp. (strain BTAi1 / ATCC BAA-1182), this protein is Aspartate carbamoyltransferase catalytic subunit.